The chain runs to 1234 residues: Coiled-coil domain-containing protein CG32809 (1234 aa).

Residues 1–11 (MLIRWKSKDKS) show a composition bias toward basic and acidic residues. Disordered regions lie at residues 1 to 88 (MLIR…HAHQ), 107 to 129 (KNKK…FDDD), and 330 to 350 (KVSM…NYEE). Residues 12–25 (ASSNQSVGGSSSSS) show a composition bias toward low complexity. The span at 55-69 (GDERRRAMRRDDPRR) shows a compositional bias: basic and acidic residues. The stretch at 412-436 (HRIRVEHMERQLANLTGLVQKALVN) forms a coiled coil. The disordered stretch occupies residues 498–548 (DIQGIPKSHNPLHAAETKPTKPAIKSSTLPRTSSQERDRLKPPPPPKPIVL). Coiled-coil stretches lie at residues 565 to 594 (EVYN…SQAQ) and 630 to 666 (TRIS…EVIN). 4 disordered regions span residues 754-793 (EQRL…ALSG), 815-852 (IAQQ…DESA), 928-1011 (LHSY…PPNQ), and 1028-1070 (SANA…ESGN). 5 stretches are compositionally biased toward low complexity: residues 817-837 (QQQQ…QHQQ), 952-965 (TSSS…GSSS), 993-1004 (TSSRSPLASPTS), 1028-1039 (SANANANANSNA), and 1046-1068 (VGET…GNES). A coiled-coil region spans residues 1077–1105 (VALEMRHQELLKKQKMLQEQYQRLQQMSK).

This Drosophila melanogaster (Fruit fly) protein is Coiled-coil domain-containing protein CG32809.